The primary structure comprises 165 residues: uncharacterized protein (165 aa).

A helical transmembrane segment spans residues 20 to 40; it reads INLIASIVLWLLFVITVIGTF. An N-linked (GlcNAc...) asparagine; by host glycan is attached at Asn51. A helical transmembrane segment spans residues 97-117; that stretch reads VGIIVILIFMLMIIMNGFYQM.

The protein resides in the membrane. This is an uncharacterized protein from Acanthamoeba polyphaga (Amoeba).